We begin with the raw amino-acid sequence, 705 residues long: Rab guanine nucleotide exchange factor sec2 (705 aa).

Residues 144–285 (QTTLDDNLVA…KSVMQGMNIA (142 aa)) are a coiled coil.

The protein belongs to the SEC2 family.

Its function is as follows. Guanine nucleotide exchange factor that plays an important role in regulating the growth and virulence, probably by regulating the autophagy pathway. Affects the sensitivity to cell wall disruptors and the cell wall thickness by regulating the expression levels of the cell wall integrity (CWI) pathway genes, thus coordinating the growth and virulence. Positively regulates the autophagy pathway to enhance the expression of CWI pathway genes in the presence of autophagy inducers. The protein is Rab guanine nucleotide exchange factor sec2 of Aspergillus fumigatus (strain ATCC MYA-4609 / CBS 101355 / FGSC A1100 / Af293) (Neosartorya fumigata).